Here is a 391-residue protein sequence, read N- to C-terminus: Pectin acetylesterase 11 (391 aa).

A signal peptide spans 1–23 (MTWLKQMWSSILVLAVVVIGARA). Residues Ser-171, Asp-267, and His-334 each act as charge relay system in the active site.

The protein belongs to the pectinacetylesterase family.

The protein resides in the secreted. Its subcellular location is the cell wall. Functionally, hydrolyzes acetyl esters in homogalacturonan regions of pectin. In type I primary cell wall, galacturonic acid residues of pectin can be acetylated at the O-2 and O-3 positions. Decreasing the degree of acetylation of pectin gels in vitro alters their physical properties. This chain is Pectin acetylesterase 11, found in Arabidopsis thaliana (Mouse-ear cress).